A 590-amino-acid chain; its full sequence is Arginine--tRNA ligase (590 aa).

The short motif at 130-140 is the 'HIGH' region element; it reads PNIAKEMHVGH.

This sequence belongs to the class-I aminoacyl-tRNA synthetase family. Monomer.

The protein resides in the cytoplasm. It catalyses the reaction tRNA(Arg) + L-arginine + ATP = L-arginyl-tRNA(Arg) + AMP + diphosphate. This is Arginine--tRNA ligase from Synechococcus sp. (strain CC9311).